Reading from the N-terminus, the 184-residue chain is Protein Syd (184 aa).

This sequence belongs to the Syd family.

The protein resides in the cell inner membrane. Interacts with the SecY protein in vivo. May bind preferentially to an uncomplexed state of SecY, thus functioning either as a chelating agent for excess SecY in the cell or as a regulatory factor that negatively controls the translocase function. The chain is Protein Syd from Edwardsiella ictaluri (strain 93-146).